The sequence spans 429 residues: WRKY transcription factor 44 (429 aa).

Residues 159 to 223 (TGDRSSVDGY…YQGEHNHSKP (65 aa)) constitute a DNA-binding region (WRKY 1). The Zn(2+) site is built by cysteine 190, cysteine 195, histidine 218, and histidine 220. Disordered regions lie at residues 214–279 (YQGE…RTEK) and 292–348 (AVPR…SDSL). Polar residues-rich tracts occupy residues 254–275 (QDPN…STQN), 295–313 (RSTN…SSQC), and 334–345 (SEAGVSQGSVES). The WRKY 2 DNA-binding region spans 343 to 408 (VESDSLEDGF…YEGKHNHHLL (66 aa)). The Zn(2+) site is built by cysteine 374, cysteine 379, histidine 403, and histidine 405. Over residues 410–422 (SPPSSSTLPFNSP) the composition is skewed to low complexity. The tract at residues 410–429 (SPPSSSTLPFNSPQLSKQTI) is disordered.

This sequence belongs to the WRKY group I family. Leaf promordia, trichomes, atrichoblasts, fertilized eggs, seed coat.

The protein localises to the nucleus. Transcription factor. Interacts specifically with the W box (5'-(T)TGAC[CT]-3'), a frequently occurring elicitor-responsive cis-acting element. Regulates trichome development, production of mucilage and tannin in seed coats, and maybe root hair development. This Arabidopsis thaliana (Mouse-ear cress) protein is WRKY transcription factor 44 (WRKY44).